Here is a 510-residue protein sequence, read N- to C-terminus: NAD(P)H-quinone oxidoreductase subunit 2 B, chloroplastic (510 aa).

The next 13 helical transmembrane spans lie at L24–L44, I57–F77, I99–I119, M124–C144, L149–Y169, Y183–G203, P227–A247, W295–I315, M323–N343, Y354–L374, A395–F415, L418–L438, and M484–I504.

It belongs to the complex I subunit 2 family. NDH is composed of at least 16 different subunits, 5 of which are encoded in the nucleus.

The protein resides in the plastid. Its subcellular location is the chloroplast thylakoid membrane. The enzyme catalyses a plastoquinone + NADH + (n+1) H(+)(in) = a plastoquinol + NAD(+) + n H(+)(out). It carries out the reaction a plastoquinone + NADPH + (n+1) H(+)(in) = a plastoquinol + NADP(+) + n H(+)(out). Its function is as follows. NDH shuttles electrons from NAD(P)H:plastoquinone, via FMN and iron-sulfur (Fe-S) centers, to quinones in the photosynthetic chain and possibly in a chloroplast respiratory chain. The immediate electron acceptor for the enzyme in this species is believed to be plastoquinone. Couples the redox reaction to proton translocation, and thus conserves the redox energy in a proton gradient. This is NAD(P)H-quinone oxidoreductase subunit 2 B, chloroplastic from Gossypium barbadense (Sea Island cotton).